A 64-amino-acid chain; its full sequence is Large ribosomal subunit protein uL29 (64 aa).

The protein belongs to the universal ribosomal protein uL29 family.

The protein is Large ribosomal subunit protein uL29 of Ligilactobacillus salivarius (strain UCC118) (Lactobacillus salivarius).